Here is a 568-residue protein sequence, read N- to C-terminus: Sulfite reductase [NADPH] hemoprotein beta-component (568 aa).

The [4Fe-4S] cluster site is built by Cys-425, Cys-431, Cys-470, and Cys-474. Residue Cys-474 participates in siroheme binding.

Belongs to the nitrite and sulfite reductase 4Fe-4S domain family. As to quaternary structure, alpha(8)-beta(8). The alpha component is a flavoprotein, the beta component is a hemoprotein. Requires siroheme as cofactor. It depends on [4Fe-4S] cluster as a cofactor.

It catalyses the reaction hydrogen sulfide + 3 NADP(+) + 3 H2O = sulfite + 3 NADPH + 4 H(+). Its pathway is sulfur metabolism; hydrogen sulfide biosynthesis; hydrogen sulfide from sulfite (NADPH route): step 1/1. Its function is as follows. Component of the sulfite reductase complex that catalyzes the 6-electron reduction of sulfite to sulfide. This is one of several activities required for the biosynthesis of L-cysteine from sulfate. The polypeptide is Sulfite reductase [NADPH] hemoprotein beta-component (Xanthomonas campestris pv. campestris (strain B100)).